A 255-amino-acid polypeptide reads, in one-letter code: Proteasome subunit alpha type-3 (255 aa).

Serine 2 carries the N-acetylserine modification. 3 positions are modified to N6-acetyllysine: lysine 57, lysine 206, and lysine 230. Phosphoserine occurs at positions 243 and 250.

Belongs to the peptidase T1A family. As to quaternary structure, the 26S proteasome consists of a 20S proteasome core and two 19S regulatory subunits. The 20S proteasome core is a barrel-shaped complex made of 28 subunits that are arranged in four stacked rings. The two outer rings are each formed by seven alpha subunits, and the two inner rings are formed by seven beta subunits. The proteolytic activity is exerted by three beta-subunits PSMB5, PSMB6 and PSMB7. Interacts with AURKB. Interacts with CDKN1A. Interacts with MDM2 and RB1. Interacts with the C-terminus of TBXA2R isoform 2. Interacts with DNAJB2. As to expression, detected in liver (at protein level).

It is found in the cytoplasm. It localises to the nucleus. Functionally, component of the 20S core proteasome complex involved in the proteolytic degradation of most intracellular proteins. This complex plays numerous essential roles within the cell by associating with different regulatory particles. Associated with two 19S regulatory particles, forms the 26S proteasome and thus participates in the ATP-dependent degradation of ubiquitinated proteins. The 26S proteasome plays a key role in the maintenance of protein homeostasis by removing misfolded or damaged proteins that could impair cellular functions, and by removing proteins whose functions are no longer required. Associated with the PA200 or PA28, the 20S proteasome mediates ubiquitin-independent protein degradation. This type of proteolysis is required in several pathways including spermatogenesis (20S-PA200 complex) or generation of a subset of MHC class I-presented antigenic peptides (20S-PA28 complex). Binds to the C-terminus of CDKN1A and thereby mediates its degradation. Negatively regulates the membrane trafficking of the cell-surface thromboxane A2 receptor (TBXA2R) isoform 2. This chain is Proteasome subunit alpha type-3 (Psma3), found in Mus musculus (Mouse).